The following is a 779-amino-acid chain: Pleckstrin homology domain-containing family A member 4 (779 aa).

A PH domain is found at 54–153 (PVHIRGWLHK…WLRALGKASR (100 aa)). Disordered regions lie at residues 152-355 (SRAE…LPGP), 495-669 (AGLG…SGGH), and 694-766 (SPER…QEEG). S164 carries the post-translational modification Phosphoserine. The span at 183 to 193 (VNRREEGRTSE) shows a compositional bias: basic and acidic residues. 2 stretches are compositionally biased toward low complexity: residues 246 to 259 (PRPRSAPVRRPPLS) and 324 to 334 (QSTQVSSGSST). Basic and acidic residues predominate over residues 517–527 (QREESSERESL). Residues 528–540 (SESLELSSPQSPE) show a composition bias toward low complexity. Position 562 is a phosphoserine (S562). Over residues 567-580 (RASSPECRQQSSPL) the composition is skewed to polar residues. Composition is skewed to low complexity over residues 608 to 627 (GLSLPRPTSPRLLTLGRTLS) and 649 to 659 (SSGSWSSPRHS). Positions 720–740 (VTSSPTSHKANSATTGFSCQG) are enriched in polar residues.

The protein localises to the cytoplasm. Its subcellular location is the membrane. Its function is as follows. Binds specifically to phosphatidylinositol 3-phosphate (PtdIns3P), but not to other phosphoinositides. The protein is Pleckstrin homology domain-containing family A member 4 (Plekha4) of Rattus norvegicus (Rat).